The sequence spans 203 residues: Probable GTP-binding protein EngB (203 aa).

Residues 1-190 (MPEIVLVGRS…LEALQERVRK (190 aa)) form the EngB-type G domain. GTP contacts are provided by residues 8 to 15 (GRSNVGKS), 35 to 39 (GVTRK), 53 to 56 (DMPG), 132 to 135 (NKID), and 169 to 171 (ISA). Mg(2+)-binding residues include Ser-15 and Thr-37.

The protein belongs to the TRAFAC class TrmE-Era-EngA-EngB-Septin-like GTPase superfamily. EngB GTPase family. Requires Mg(2+) as cofactor.

Necessary for normal cell division and for the maintenance of normal septation. This Methanopyrus kandleri (strain AV19 / DSM 6324 / JCM 9639 / NBRC 100938) protein is Probable GTP-binding protein EngB.